The sequence spans 527 residues: Nucleobase-ascorbate transporter LPE1 (527 aa).

The next 12 membrane-spanning stretches (helical) occupy residues 43-63 (LVML…MGGG), 68-88 (AIVI…QVHF), 92-112 (LPAV…IILS), 132-152 (LQGA…FGIW), 163-183 (AAVP…FPGV), 189-209 (VGLP…HLFA), 219-239 (AVLV…AAGA), 284-304 (FAML…LIAV), 361-383 (VIKI…AVLA), 387-409 (LPIF…FSLL), 427-447 (LFLG…FGFG), and 458-478 (VMVN…AYLL).

Belongs to the nucleobase:cation symporter-2 (NCS2) (TC 2.A.40) family. Highly expressed in roots.

It is found in the membrane. With respect to regulation, inhibited by excess of xanthin, uric acid and ascorbic acid, and by 100 um N,N-dicyclohexylcarbodiimide and 30 um carbonyl cyanide m-chlorophenyl-hydrazone. Its function is as follows. High affinity uric acid-xanthine transporter in A.nidulans. Binds, but cannot transport ascorbic acid. The sequence is that of Nucleobase-ascorbate transporter LPE1 (LPE1) from Zea mays (Maize).